The primary structure comprises 1230 residues: Ubiquitin carboxyl-terminal hydrolase 15 (1230 aa).

The MATH domain maps to 39-179 (EDSFTWNIPD…EGTLNITAYV (141 aa)). The USP domain occupies 205–536 (VGFRNQGATC…SAYMLVYIRQ (332 aa)). Residue Cys-214 is the Nucleophile of the active site. The Proton acceptor role is filled by His-465.

It belongs to the peptidase C19 family. As to quaternary structure, interacts with PEX6; promoting association with the PEX1-PEX6 ATPase complex.

The protein localises to the cytoplasm. Its subcellular location is the cytosol. The protein resides in the peroxisome. It carries out the reaction Thiol-dependent hydrolysis of ester, thioester, amide, peptide and isopeptide bonds formed by the C-terminal Gly of ubiquitin (a 76-residue protein attached to proteins as an intracellular targeting signal).. Functionally, deubiquitinase involved in peroxisome import by mediating deubiquitination of the peroxisomal import receptor PEX5. Catalyzes deubiquitination of both monoubiquitiated and polyubiquitinated forms of PEX5 following its retrotranslocation into the cytosol, resetting PEX5 for a subsequent import cycle. This is Ubiquitin carboxyl-terminal hydrolase 15 from Saccharomyces cerevisiae (strain ATCC 204508 / S288c) (Baker's yeast).